We begin with the raw amino-acid sequence, 587 residues long: tRNA (guanine(37)-N(1))-methyltransferase 2 (587 aa).

S-adenosyl-L-methionine-binding positions include R360 and D430–A431. Residues A446 to M469 are disordered. Over residues S450–N461 the composition is skewed to basic and acidic residues. N478 contributes to the S-adenosyl-L-methionine binding site.

This sequence belongs to the class I-like SAM-binding methyltransferase superfamily. TRM5/TYW2 family. As to quaternary structure, monomer.

It localises to the mitochondrion matrix. It is found in the nucleus. The protein resides in the cytoplasm. It carries out the reaction guanosine(37) in tRNA + S-adenosyl-L-methionine = N(1)-methylguanosine(37) in tRNA + S-adenosyl-L-homocysteine + H(+). In terms of biological role, specifically methylates the N1 position of guanosine-37 in various cytoplasmic and mitochondrial tRNAs. Methylation is not dependent on the nature of the nucleoside 5' of the target nucleoside. This is the first step in the biosynthesis of wybutosine (yW), a modified base adjacent to the anticodon of tRNAs and required for accurate decoding. In Phaeodactylum tricornutum (strain CCAP 1055/1), this protein is tRNA (guanine(37)-N(1))-methyltransferase 2.